We begin with the raw amino-acid sequence, 339 residues long: Uroporphyrinogen decarboxylase (339 aa).

Residues Arg21–Arg25, Asp71, Tyr147, Ser202, and His315 contribute to the substrate site.

It belongs to the uroporphyrinogen decarboxylase family. Homodimer.

It is found in the cytoplasm. The enzyme catalyses uroporphyrinogen III + 4 H(+) = coproporphyrinogen III + 4 CO2. It functions in the pathway porphyrin-containing compound metabolism; protoporphyrin-IX biosynthesis; coproporphyrinogen-III from 5-aminolevulinate: step 4/4. Catalyzes the decarboxylation of four acetate groups of uroporphyrinogen-III to yield coproporphyrinogen-III. The polypeptide is Uroporphyrinogen decarboxylase (Helicobacter acinonychis (strain Sheeba)).